Consider the following 338-residue polypeptide: Lipoate-protein ligase A (338 aa).

The BPL/LPL catalytic domain maps to Pro29–Val216. Residues Arg71, Gly76–Phe79, and Lys134 each bind ATP. (R)-lipoate is bound at residue Lys134.

It belongs to the LplA family. In terms of assembly, monomer.

The protein resides in the cytoplasm. The enzyme catalyses L-lysyl-[lipoyl-carrier protein] + (R)-lipoate + ATP = N(6)-[(R)-lipoyl]-L-lysyl-[lipoyl-carrier protein] + AMP + diphosphate + H(+). The protein operates within protein modification; protein lipoylation via exogenous pathway; protein N(6)-(lipoyl)lysine from lipoate: step 1/2. It participates in protein modification; protein lipoylation via exogenous pathway; protein N(6)-(lipoyl)lysine from lipoate: step 2/2. In terms of biological role, catalyzes both the ATP-dependent activation of exogenously supplied lipoate to lipoyl-AMP and the transfer of the activated lipoyl onto the lipoyl domains of lipoate-dependent enzymes. The protein is Lipoate-protein ligase A of Salmonella choleraesuis (strain SC-B67).